We begin with the raw amino-acid sequence, 317 residues long: Beta-ketoacyl-[acyl-carrier-protein] synthase III (317 aa).

Residues C112 and H244 contribute to the active site. The tract at residues 245 to 249 (QANIR) is ACP-binding. The active site involves N274.

Belongs to the thiolase-like superfamily. FabH family. Homodimer.

The protein localises to the cytoplasm. The catalysed reaction is malonyl-[ACP] + acetyl-CoA + H(+) = 3-oxobutanoyl-[ACP] + CO2 + CoA. Its pathway is lipid metabolism; fatty acid biosynthesis. Functionally, catalyzes the condensation reaction of fatty acid synthesis by the addition to an acyl acceptor of two carbons from malonyl-ACP. Catalyzes the first condensation reaction which initiates fatty acid synthesis and may therefore play a role in governing the total rate of fatty acid production. Possesses both acetoacetyl-ACP synthase and acetyl transacylase activities. Its substrate specificity determines the biosynthesis of branched-chain and/or straight-chain of fatty acids. The protein is Beta-ketoacyl-[acyl-carrier-protein] synthase III of Rickettsia typhi (strain ATCC VR-144 / Wilmington).